The primary structure comprises 103 residues: Integration host factor subunit beta (103 aa).

The tract at residues 62–81 (RNPKTGESVALPGKHVPHFK) is disordered.

The protein belongs to the bacterial histone-like protein family. In terms of assembly, heterodimer of an alpha and a beta chain.

Its function is as follows. This protein is one of the two subunits of integration host factor, a specific DNA-binding protein that functions in genetic recombination as well as in transcriptional and translational control. The polypeptide is Integration host factor subunit beta (Xanthomonas axonopodis pv. citri (strain 306)).